A 272-amino-acid polypeptide reads, in one-letter code: Cytochrome b-c1 complex subunit Rieske, mitochondrial (272 aa).

The Mitochondrial matrix segment spans residues 77–104 (VHNDVTVPDFSAYRREDVMDATTSSQTS). A helical membrane pass occupies residues 105–138 (SEDRKGFSYLVTATACVATAYAAKNVVTQFISSL). Over 139–272 (SASADVLALS…FVGDDLVVVG (134 aa)) the chain is Mitochondrial intermembrane. The Rieske domain maps to 185-270 (EAEVDVSKLR…YQFVGDDLVV (86 aa)). Positions 215, 217, 218, 234, 237, and 239 each coordinate [2Fe-2S] cluster. A disulfide bridge links C220 with C236.

It belongs to the Rieske iron-sulfur protein family. As to quaternary structure, component of the ubiquinol-cytochrome c oxidoreductase (cytochrome b-c1 complex, complex III, CIII), a multisubunit enzyme composed of 11 subunits. The complex is composed of 3 respiratory subunits cytochrome b, cytochrome c1 and Rieske protein UQCRFS1, 2 core protein subunits UQCRC1/QCR1 and UQCRC2/QCR2, and 6 low-molecular weight protein subunits UQCRH/QCR6, UQCRB/QCR7, UQCRQ/QCR8, UQCR10/QCR9, UQCR11/QCR10 and subunit 9, the cleavage product of Rieske protein UQCRFS1. The complex exists as an obligatory dimer and forms supercomplexes (SCs) in the inner mitochondrial membrane with NADH-ubiquinone oxidoreductase (complex I, CI) and cytochrome c oxidase (complex IV, CIV), resulting in different assemblies (supercomplex SCI(1)III(2)IV(1) and megacomplex MCI(2)III(2)IV(2)). Incorporation of the Rieske protein UQCRFS1 is the penultimate step in complex III assembly. Interacts with TTC19, which is involved in the clearance of UQCRFS1 fragments. In terms of assembly, component of the ubiquinol-cytochrome c oxidoreductase (cytochrome b-c1 complex, complex III, CIII). Subunit 9 corresponds to the mitochondrial targeting sequence (MTS) of Rieske protein UQCRFS1. It is retained after processing and incorporated inside complex III, where it remains bound to the complex and localizes between the 2 core subunits UQCRC1/QCR1 and UQCRC2/QCR2. The cofactor is [2Fe-2S] cluster. Post-translationally, proteolytic processing is necessary for the correct insertion of UQCRFS1 in the complex III dimer. Several fragments are generated during UQCRFS1 insertion, most probably due to the endogenous matrix-processing peptidase (MPP) activity of the 2 core protein subunits UQCRC1/QCR1 and UQCRC2/QCR2, which are homologous to the 2 mitochondrial-processing peptidase (MPP) subunits beta-MPP and alpha-MPP respectively. The action of the protease is also necessary for the clearance of the UQCRFS1 fragments.

The protein localises to the mitochondrion inner membrane. It catalyses the reaction a quinol + 2 Fe(III)-[cytochrome c](out) = a quinone + 2 Fe(II)-[cytochrome c](out) + 2 H(+)(out). Functionally, component of the ubiquinol-cytochrome c oxidoreductase, a multisubunit transmembrane complex that is part of the mitochondrial electron transport chain which drives oxidative phosphorylation. The respiratory chain contains 3 multisubunit complexes succinate dehydrogenase (complex II, CII), ubiquinol-cytochrome c oxidoreductase (cytochrome b-c1 complex, complex III, CIII) and cytochrome c oxidase (complex IV, CIV), that cooperate to transfer electrons derived from NADH and succinate to molecular oxygen, creating an electrochemical gradient over the inner membrane that drives transmembrane transport and the ATP synthase. The cytochrome b-c1 complex catalyzes electron transfer from ubiquinol to cytochrome c, linking this redox reaction to translocation of protons across the mitochondrial inner membrane, with protons being carried across the membrane as hydrogens on the quinol. In the process called Q cycle, 2 protons are consumed from the matrix, 4 protons are released into the intermembrane space and 2 electrons are passed to cytochrome c. The Rieske protein is a catalytic core subunit containing a [2Fe-2S] iron-sulfur cluster. It cycles between 2 conformational states during catalysis to transfer electrons from the quinol bound in the Q(0) site in cytochrome b to cytochrome c1. Incorporation of UQCRFS1 is the penultimate step in complex III assembly. Its function is as follows. Component of the ubiquinol-cytochrome c oxidoreductase (cytochrome b-c1 complex, complex III, CIII). UQCRFS1 undergoes proteolytic processing once it is incorporated in the complex III dimer. One of the fragments, called subunit 9, corresponds to its mitochondrial targeting sequence (MTS). The proteolytic processing is necessary for the correct insertion of UQCRFS1 in the complex III dimer, but the persistence of UQCRFS1-derived fragments may prevent newly imported UQCRFS1 to be processed and assembled into complex III and is detrimental for the complex III structure and function. The protein is Cytochrome b-c1 complex subunit Rieske, mitochondrial (UQCRFS1) of Gallus gallus (Chicken).